We begin with the raw amino-acid sequence, 103 residues long: Small integral membrane protein 32 (103 aa).

Residues 55–75 (YLLLFFLLLLSVALVVLFIGC) form a helical membrane-spanning segment.

Its subcellular location is the membrane. This Homo sapiens (Human) protein is Small integral membrane protein 32.